Here is a 633-residue protein sequence, read N- to C-terminus: MSEAPRIQLLSPRLANQIAAGEVVERPASVAKELLENSLDAGSRRIDVEVEQGGIKLLRVRDDGRGIPADDLPLALARHATSKIRELEDLERVMSLGFRGEALASISSVARLTMTSRTADAGEAWQVETEGRDMQPRVQPAAHPVGTSVEVRDLFFNTPARRKFLRAEKTEFDHLQEVIKRLALARFDVAFHLRHNGKTIFALHEARDELARARRVGAVCGQAFLEQALPIEVERNGLHLWGWVGLPTFSRSQPDLQYFYVNGRMVRDKLVAHAVRQAYRDVLYNGRHPTFVLFFEVDPAVVDVNVHPTKHEVRFRDSRMVHDFLYGTLHRALGEVRPDDQLAPPGATSLTEPRPTGAAAGEFGPQGEMRLAESVLESPAARVGWSGGSSASGGSSGYSAYTRPEAPPSLAEAGGAYKAYFAPLPAGEAPAALPESAQDIPPLGYALAQLKGIYILAENAHGLVLVDMHAAHERITYERLKVAMASEGLRGQPLLVPESIAVSEREADCAEEHSSWFQRLGFELQRLGPESLAIRQIPALLKQAEATQLVRDVIADLLEYGTSDRIQAHLNELLGTMACHGAVRANRRLTLPEMNALLRDMEITERSGQCNHGRPTWTQLGLDELDKLFLRGR.

2 disordered regions span residues 337–364 and 383–405; these read RPDD…GEFG and VGWS…TRPE. Positions 385–396 are enriched in gly residues; that stretch reads WSGGSSASGGSS.

Belongs to the DNA mismatch repair MutL/HexB family.

This protein is involved in the repair of mismatches in DNA. It is required for dam-dependent methyl-directed DNA mismatch repair. May act as a 'molecular matchmaker', a protein that promotes the formation of a stable complex between two or more DNA-binding proteins in an ATP-dependent manner without itself being part of a final effector complex. The sequence is that of DNA mismatch repair protein MutL from Pseudomonas aeruginosa (strain LESB58).